The sequence spans 138 residues: Putative ribonuclease VapC45 (138 aa).

Its function is as follows. Toxic component of a type II toxin-antitoxin (TA) system. An RNase. The cognate antitoxin is VapB45. The polypeptide is Putative ribonuclease VapC45 (Mycobacterium tuberculosis (strain ATCC 25618 / H37Rv)).